The sequence spans 30 residues: Cysteine-rich venom protein hematin (30 aa).

The protein belongs to the CRISP family. Post-translationally, contains 8 disulfide bonds. Expressed by the venom gland.

Its subcellular location is the secreted. Inhibits calcium-activated potassium channels (KCa), voltage-gated potassium channel (Kv), and the calcium release channel/ryanodine receptor (RyR). In Hemachatus haemachatus (Rinkhals), this protein is Cysteine-rich venom protein hematin.